Here is a 304-residue protein sequence, read N- to C-terminus: UDP-N-acetylenolpyruvoylglucosamine reductase (304 aa).

Positions 33–212 constitute an FAD-binding PCMH-type domain; it reads MGGLADLFLI…KEMMDDLTHK (180 aa). Arginine 176 is an active-site residue. Serine 226 (proton donor) is an active-site residue. Glutamate 296 is an active-site residue.

It belongs to the MurB family. It depends on FAD as a cofactor.

It localises to the cytoplasm. The catalysed reaction is UDP-N-acetyl-alpha-D-muramate + NADP(+) = UDP-N-acetyl-3-O-(1-carboxyvinyl)-alpha-D-glucosamine + NADPH + H(+). It functions in the pathway cell wall biogenesis; peptidoglycan biosynthesis. Functionally, cell wall formation. This Exiguobacterium sibiricum (strain DSM 17290 / CCUG 55495 / CIP 109462 / JCM 13490 / 255-15) protein is UDP-N-acetylenolpyruvoylglucosamine reductase.